Here is a 362-residue protein sequence, read N- to C-terminus: Dihydroorotate dehydrogenase (quinone) (362 aa).

FMN is bound by residues 62-66 (AGYDK) and Thr86. Lys66 serves as a coordination point for substrate. 111–115 (NRLGF) is a substrate binding site. The FMN site is built by Asn139 and Asn170. Asn170 lines the substrate pocket. Ser173 serves as the catalytic Nucleophile. Asn175 provides a ligand contact to substrate. Lys215 and Ser243 together coordinate FMN. 244 to 245 (NT) serves as a coordination point for substrate. FMN is bound by residues Gly266, Gly295, and 316 to 317 (YS).

This sequence belongs to the dihydroorotate dehydrogenase family. Type 2 subfamily. As to quaternary structure, monomer. Requires FMN as cofactor.

It is found in the cell membrane. It catalyses the reaction (S)-dihydroorotate + a quinone = orotate + a quinol. It participates in pyrimidine metabolism; UMP biosynthesis via de novo pathway; orotate from (S)-dihydroorotate (quinone route): step 1/1. In terms of biological role, catalyzes the conversion of dihydroorotate to orotate with quinone as electron acceptor. The protein is Dihydroorotate dehydrogenase (quinone) of Sinorhizobium medicae (strain WSM419) (Ensifer medicae).